A 335-amino-acid polypeptide reads, in one-letter code: Probable UDP-N-acetylglucosamine pyrophosphorylase (335 aa).

The Substrate binding motif lies at 45–48 (LSGG). UTP is bound by residues 45-48 (LSGG), K59, Q120, and G145. N146 serves as a coordination point for substrate. D170 contacts UTP. The Substrate binding motif lies at 218 to 219 (EY). K278 is a binding site for UTP. Residue K308 participates in substrate binding.

It belongs to the UDPGP type 1 family.

It localises to the cytoplasm. The enzyme catalyses N-acetyl-alpha-D-glucosamine 1-phosphate + UTP + H(+) = UDP-N-acetyl-alpha-D-glucosamine + diphosphate. The protein operates within nucleotide-sugar biosynthesis; UDP-N-acetyl-alpha-D-glucosamine biosynthesis; UDP-N-acetyl-alpha-D-glucosamine from N-acetyl-alpha-D-glucosamine 1-phosphate: step 1/1. In Encephalitozoon cuniculi (strain GB-M1) (Microsporidian parasite), this protein is Probable UDP-N-acetylglucosamine pyrophosphorylase (UAP1).